Here is a 527-residue protein sequence, read N- to C-terminus: Anthranilate synthase component 1 1 (527 aa).

Serine 52 contributes to the L-tryptophan binding site. Positions 53–72 (AEKTPASDPDGAFTPDTTTE) are disordered. 298–300 (PYM) provides a ligand contact to L-tryptophan. 333–334 (GT) provides a ligand contact to chorismate. Glutamate 360 contacts Mg(2+). Chorismate-binding positions include tyrosine 448, arginine 468, 486–488 (GAG), and glycine 488. Glutamate 501 is a Mg(2+) binding site.

This sequence belongs to the anthranilate synthase component I family. In terms of assembly, tetramer of two components I and two components II. Mg(2+) serves as cofactor.

It carries out the reaction chorismate + L-glutamine = anthranilate + pyruvate + L-glutamate + H(+). It functions in the pathway amino-acid biosynthesis; L-tryptophan biosynthesis; L-tryptophan from chorismate: step 1/5. This chain is Anthranilate synthase component 1 1 (trpE1), found in Halobacterium salinarum (strain ATCC 700922 / JCM 11081 / NRC-1) (Halobacterium halobium).